The following is a 216-amino-acid chain: Ornithine decarboxylase antizyme 1 (216 aa).

The protein belongs to the ODC antizyme family. In terms of assembly, interacts with ODC1 and thereby sterically blocks ODC homodimerization.

In terms of biological role, ornithine decarboxylase (ODC) antizyme protein that negatively regulates ODC activity and intracellular polyamine biosynthesis and uptake in response to increased intracellular polyamine levels. Binds to ODC monomers, inhibiting the assembly of the functional ODC homodimer, and targets the monomers for ubiquitin-independent proteolytic destruction by the 26S proteasome. This chain is Ornithine decarboxylase antizyme 1 (oaz1), found in Xenopus laevis (African clawed frog).